A 362-amino-acid polypeptide reads, in one-letter code: MHYCERTLDPKYILKIALKLRQSLSLFFQNSQSLQRAYSTPYSYYRIILQKENKEKQALARHKCISILEFFKNLLFVHLLSLSKNQREGCSTDMAVVSTPFFNRNLWYRLLSSRFSLWKSYCPRFFLDYLEAFGLLSDFLDHQAVIKFFELETHFSYYPVSGFVAPHQYLSLLQDRYFPIASVMRTLDKDNFSLTPDLIHDLLGHVPWLLHPSFSEFFINMGRLFTKVIEKVQALPSKKQRIQTLQSNLIAIVRCFWFTVESGLIENHEGRKAYGAVLISSPQELGHAFIDNVRVLPLELDQIIRLPFNTSTPQETLFSIRHFDELVELTSKLEWMLDQGLLESIPLYNQEKYLSGFEVLCQ.

His200 and His205 together coordinate Fe cation.

This sequence belongs to the biopterin-dependent aromatic amino acid hydroxylase family. Fe(2+) is required as a cofactor.

The chain is Probable aromatic amino acid hydroxylase from Chlamydia pneumoniae (Chlamydophila pneumoniae).